The sequence spans 226 residues: E3 ubiquitin-protein ligase RNF186 (226 aa).

The RING-type zinc-finger motif lies at 39-85 (CLVCREPYSGVRPPKLLGCQHAFCAVCLKLLLCVQDDAWSIPCPLCR). The tract at residues 121–143 (GLANPATLTAGQPREAGEEEQDA) is disordered. The next 2 membrane-spanning stretches (helical) occupy residues 157–177 (HLLL…PGVI) and 179–199 (WVLS…CSHP).

As to quaternary structure, interacts with BNIP1. Polyubiquitinated. 'Lys-29' autoubiquitination leads to proteasomal degradation.

It is found in the endoplasmic reticulum membrane. It catalyses the reaction S-ubiquitinyl-[E2 ubiquitin-conjugating enzyme]-L-cysteine + [acceptor protein]-L-lysine = [E2 ubiquitin-conjugating enzyme]-L-cysteine + N(6)-ubiquitinyl-[acceptor protein]-L-lysine.. It functions in the pathway protein modification; protein ubiquitination. Its function is as follows. E3 ubiquitin protein ligase that is part of an apoptotic signaling pathway activated by endoplasmic reticulum stress. Stimulates the expression of proteins specific of the unfolded protein response (UPR), ubiquitinates BNIP1 and regulates its localization to the mitochondrion and induces calcium release from the endoplasmic reticulum that ultimately leads to cell apoptosis. Plays a role in the maintenance of intestinal homeostasis and clearance of enteric pathogens. Upon NOD2 stimulation, ubiquitinates the ER stress sensor activating transcription factor 6/ATF6 and promotes the unfolded protein response UPR. Participates in basal level of autophagy maintenance by regulating the ubiquitination of EPHB2. Upon stimulation by ligand EFNB1, ubiquitinates EPHB2 and further recruits MAP1LC3B for autophagy induction. Controls nutrient sensing by ubiquitinating Sestrin-2/SESN2, which is an intracellular sensor of cytosolic leucine and inhibitor of mTORC1 activity. The polypeptide is E3 ubiquitin-protein ligase RNF186 (Bos taurus (Bovine)).